The following is a 329-amino-acid chain: Sulfate/thiosulfate import ATP-binding protein CysA (329 aa).

The 235-residue stretch at 3–237 (IEVRNVSKRF…PANDFVYHFL (235 aa)) folds into the ABC transporter domain. 35 to 42 (GPSGCGKT) is an ATP binding site.

Belongs to the ABC transporter superfamily. Sulfate/tungstate importer (TC 3.A.1.6) family. The complex is composed of two ATP-binding proteins (CysA), two transmembrane proteins (CysT and CysW) and a solute-binding protein (CysP).

The protein localises to the cell inner membrane. It carries out the reaction sulfate(out) + ATP + H2O = sulfate(in) + ADP + phosphate + H(+). The catalysed reaction is thiosulfate(out) + ATP + H2O = thiosulfate(in) + ADP + phosphate + H(+). Its function is as follows. Part of the ABC transporter complex CysAWTP involved in sulfate/thiosulfate import. Responsible for energy coupling to the transport system. In Pseudomonas putida (strain ATCC 47054 / DSM 6125 / CFBP 8728 / NCIMB 11950 / KT2440), this protein is Sulfate/thiosulfate import ATP-binding protein CysA.